The sequence spans 254 residues: MAIANKNIIFVAGLGGIGFDTSREIVKRGPKNLVILDRIENPAAIAELKALNPKVTVTFYPYDVTVSVAETTKLLKTIFDKLKTVDLLINGAGILDDHQIERTIAVNFTGTVNTITAIMSFWDKRKGGPGGVIANVCSVTGFNAIYQVPVYSASKAAALSFTNSLARLAPITGVTAYSINPGITKTTLVHKFNSWLDVEPRVAELLLEHPTQTTLQCAQNFVKAIEANQNGAIWKVDLGTLEAIEWTKHWDSHI.

Residue 10 to 33 coordinates NAD(+); sequence FVAGLGGIGFDTSREIVKRGPKNL. Substrate is bound at residue Ser-138. The Proton acceptor role is filled by Tyr-151.

It belongs to the short-chain dehydrogenases/reductases (SDR) family. In terms of assembly, homodimer.

The enzyme catalyses a primary alcohol + NAD(+) = an aldehyde + NADH + H(+). It carries out the reaction a secondary alcohol + NAD(+) = a ketone + NADH + H(+). The protein is Alcohol dehydrogenase 2 (Adh2) of Drosophila mojavensis (Fruit fly).